We begin with the raw amino-acid sequence, 119 residues long: Acidic phospholipase A2 2 (119 aa).

Disulfide bonds link Cys11–Cys71, Cys26–Cys118, Cys28–Cys44, Cys43–Cys99, Cys50–Cys92, Cys60–Cys85, and Cys78–Cys90. Positions 27, 29, and 31 each coordinate Ca(2+). His47 is an active-site residue. Asp48 is a binding site for Ca(2+). Residue Asp93 is part of the active site.

It belongs to the phospholipase A2 family. Group I subfamily. D49 sub-subfamily. In terms of assembly, homotrimer. Requires Ca(2+) as cofactor. Expressed by the venom gland.

The protein localises to the secreted. The enzyme catalyses a 1,2-diacyl-sn-glycero-3-phosphocholine + H2O = a 1-acyl-sn-glycero-3-phosphocholine + a fatty acid + H(+). Functionally, PLA2 catalyzes the calcium-dependent hydrolysis of the 2-acyl groups in 3-sn-phosphoglycerides. The sequence is that of Acidic phospholipase A2 2 from Naja naja (Indian cobra).